We begin with the raw amino-acid sequence, 606 residues long: MEVLRFTAVKSLNSCVRPEFTAMSSVIVPISTVKVSGTRKSKKKALICAKATEILSSPATVTEPLKAEPAEAPVPLLRVSPSSLQCEPGYLLPNSPVLGTGGVTGYEYLTNILSSKVYDVAYETPLQKAPKLSERLGVNVWLKREDLQPVFSFKIRGAYNMMAKLPKEQLEKGVICSSAGNHAQGVALSAQRLGCDAVIVMPVTTPDIKWKSVKRLGATVVLVGDSYDEAQAYAKKRAESEGRTFIPPFDHPDVIVGQGTVGMEINRQLKDNIHAIFVPVGGGGLIAGIAAYLKRVAPDIKIIGVEPLDANALALSLHHGQRVMLDQVGGFADGVAVKVVGEETYRLCEELIDGVVLVGRDAICASIKDMFEEKRSILEPAGALALAGAEAYCKYYGLKGENVVAITSGANMNFDRLRLVTELADVGRQREAVLATFMPEDPGSFKKFAEMVGPMNITEFKYRYNSDKERALVLYSVGLHTILELEGMVERMESADLQTINLTDNDLVKDHLRHLMGGRTNVHNELLCRFTFPEKPGALMKFLDAFSPRWNISLFHYRAQGDTGANVLVGIQVPPDEVVEFEGRADSLGYEYAMESLNEAYQLIMH.

Lys154 is subject to N6-(pyridoxal phosphate)lysine. ACT-like domains are found at residues 432 to 504 and 526 to 597; these read AVLA…NLTD and LLCR…MESL.

It belongs to the serine/threonine dehydratase family. It depends on pyridoxal 5'-phosphate as a cofactor. In terms of tissue distribution, expressed constitutively in all tissues examined including root, stem, petiole, leaf, immature flower bud, unopened flower and opened flower with the highest expression in opened flower and lowest in leaf.

It localises to the plastid. The protein localises to the chloroplast. The catalysed reaction is L-threonine = 2-oxobutanoate + NH4(+). It participates in amino-acid biosynthesis; L-isoleucine biosynthesis; 2-oxobutanoate from L-threonine: step 1/1. Strongly inhibited by 1 mM isoleucine. Has a housekeeping role in isoleucine biosynthesis. The polypeptide is Threonine dehydratase 1 biosynthetic, chloroplastic (Solanum lycopersicum (Tomato)).